Here is a 306-residue protein sequence, read N- to C-terminus: UDP-N-acetylenolpyruvoylglucosamine reductase (306 aa).

Residues 29 to 193 (RVGGPADWLF…IRASLRGTPD (165 aa)) form the FAD-binding PCMH-type domain. The active site involves arginine 173. Catalysis depends on serine 222, which acts as the Proton donor. Glutamate 292 is an active-site residue.

The protein belongs to the MurB family. Requires FAD as cofactor.

It localises to the cytoplasm. The catalysed reaction is UDP-N-acetyl-alpha-D-muramate + NADP(+) = UDP-N-acetyl-3-O-(1-carboxyvinyl)-alpha-D-glucosamine + NADPH + H(+). The protein operates within cell wall biogenesis; peptidoglycan biosynthesis. In terms of biological role, cell wall formation. This Gluconobacter oxydans (strain 621H) (Gluconobacter suboxydans) protein is UDP-N-acetylenolpyruvoylglucosamine reductase.